Reading from the N-terminus, the 499-residue chain is Cobyric acid synthase (499 aa).

Residues 246–441 (PIDIAIIKLP…IHGIFDGAEL (196 aa)) enclose the GATase cobBQ-type domain. Cys327 (nucleophile) is an active-site residue. The active site involves His433.

This sequence belongs to the CobB/CobQ family. CobQ subfamily.

Its pathway is cofactor biosynthesis; adenosylcobalamin biosynthesis. Functionally, catalyzes amidations at positions B, D, E, and G on adenosylcobyrinic A,C-diamide. NH(2) groups are provided by glutamine, and one molecule of ATP is hydrogenolyzed for each amidation. The protein is Cobyric acid synthase of Clostridium kluyveri (strain NBRC 12016).